An 88-amino-acid polypeptide reads, in one-letter code: Defensin-like protein 267 (88 aa).

The signal sequence occupies residues 1–23 (MMLSKVVLLALLLSLSCLWVAKA). Cystine bridges form between Cys45–Cys63, Cys51–Cys68, and Cys55–Cys70.

It belongs to the DEFL family.

The protein resides in the secreted. In Arabidopsis thaliana (Mouse-ear cress), this protein is Defensin-like protein 267.